The primary structure comprises 492 residues: Ribulose bisphosphate carboxylase large chain (492 aa).

Substrate-binding residues include Asn-131 and Thr-181. Lys-183 acts as the Proton acceptor in catalysis. Lys-185 contacts substrate. Mg(2+) contacts are provided by Lys-209, Asp-211, and Glu-212. Lys-209 is subject to N6-carboxylysine. His-301 acts as the Proton acceptor in catalysis. Substrate is bound by residues Arg-302, His-334, and Ser-386.

It belongs to the RuBisCO large chain family. Type I subfamily. Heterohexadecamer of 8 large chains and 8 small chains. Mg(2+) serves as cofactor.

The enzyme catalyses 2 (2R)-3-phosphoglycerate + 2 H(+) = D-ribulose 1,5-bisphosphate + CO2 + H2O. It carries out the reaction D-ribulose 1,5-bisphosphate + O2 = 2-phosphoglycolate + (2R)-3-phosphoglycerate + 2 H(+). RuBisCO catalyzes two reactions: the carboxylation of D-ribulose 1,5-bisphosphate, the primary event in carbon dioxide fixation, as well as the oxidative fragmentation of the pentose substrate. Both reactions occur simultaneously and in competition at the same active site. The polypeptide is Ribulose bisphosphate carboxylase large chain (Nitrosococcus oceani (strain ATCC 19707 / BCRC 17464 / JCM 30415 / NCIMB 11848 / C-107)).